Reading from the N-terminus, the 163-residue chain is Nucleotide-binding protein YajQ (163 aa).

This sequence belongs to the YajQ family.

Its function is as follows. Nucleotide-binding protein. This is Nucleotide-binding protein YajQ from Shigella flexneri.